The following is a 1454-amino-acid chain: Alpha-2-macroglobulin-like protein 1 (1454 aa).

Residues 1–17 (MWAQLLLGMLALSPAIA) form the signal peptide. C40 and C78 are disulfide-bonded. N120 carries an N-linked (GlcNAc...) asparagine glycan. Intrachain disulfides connect C241–C291 and C259–C279. N-linked (GlcNAc...) asparagine glycosylation is found at N281 and N409. 7 cysteine pairs are disulfide-bonded: C464/C557, C589/C769, C819/C847, C845/C881, C919/C1307, C1075/C1123, and C1338/C1453. The segment at 695–726 (SHRSPEYSTAMGAGGGHPEAFESSTPLHQAED) is bait region. N-linked (GlcNAc...) asparagine glycosylation is present at N857. Positions 970-973 (CGEQ) form a cross-link, isoglutamyl cysteine thioester (Cys-Gln). A glycan (N-linked (GlcNAc...) asparagine) is linked at N1020.

The protein belongs to the protease inhibitor I39 (alpha-2-macroglobulin) family. As to quaternary structure, monomer. In terms of tissue distribution, in the epidermis, expressed predominantly in the granular layer at the apical edge of keratinocytes (at protein level). Also detected in placenta, testis and thymus but not in epithelia of kidney, lung, small intestine or colon.

It localises to the secreted. Its function is as follows. Is able to inhibit all four classes of proteinases by a unique 'trapping' mechanism. This protein has a peptide stretch, called the 'bait region' which contains specific cleavage sites for different proteinases. When a proteinase cleaves the bait region, a conformational change is induced in the protein which traps the proteinase. The entrapped enzyme remains active against low molecular weight substrates (activity against high molecular weight substrates is greatly reduced). Following cleavage in the bait region a thioester bond is hydrolyzed and mediates the covalent binding of the protein to the proteinase. Displays inhibitory activity against chymotrypsin, papain, thermolysin, subtilisin A and, to a lesser extent, elastase but not trypsin. May play an important role during desquamation by inhibiting extracellular proteases. The sequence is that of Alpha-2-macroglobulin-like protein 1 from Homo sapiens (Human).